The chain runs to 365 residues: Mannonate dehydratase 1 (365 aa).

This sequence belongs to the mannonate dehydratase family. The cofactor is Fe(2+). Mn(2+) serves as cofactor.

It catalyses the reaction D-mannonate = 2-dehydro-3-deoxy-D-gluconate + H2O. It functions in the pathway carbohydrate metabolism; pentose and glucuronate interconversion. Its function is as follows. Catalyzes the dehydration of D-mannonate. This chain is Mannonate dehydratase 1, found in Bacillus licheniformis (strain ATCC 14580 / DSM 13 / JCM 2505 / CCUG 7422 / NBRC 12200 / NCIMB 9375 / NCTC 10341 / NRRL NRS-1264 / Gibson 46).